The sequence spans 258 residues: MQENLKNDKLKIGKYEFDSRFILGSGKYSLELIKSSIEEAKAQIITLALRRANTGEIANILDYIPKNITLLPNTSGARNADEALRIARLSRELGCGELIKIEVISDSRYLLPDNYETIKACELLAKEGFTPLPYMHADLYAARAMRDVGAAAIMPLAAPIGSNKGLCAKEFIQILLNEIDLPIIVDAGIGTPAQACEAMQMGVSAVMVNTAIAEAKDIALMARAFSLAVNAGRAAFLAGLASVSEAKASSPLTGFLRD.

Lysine 100 (schiff-base intermediate with DXP) is an active-site residue. Residues glycine 161, 187 to 188, and 209 to 210 each bind 1-deoxy-D-xylulose 5-phosphate; these read AG and NT.

It belongs to the ThiG family. In terms of assembly, homotetramer. Forms heterodimers with either ThiH or ThiS.

It is found in the cytoplasm. The catalysed reaction is [ThiS sulfur-carrier protein]-C-terminal-Gly-aminoethanethioate + 2-iminoacetate + 1-deoxy-D-xylulose 5-phosphate = [ThiS sulfur-carrier protein]-C-terminal Gly-Gly + 2-[(2R,5Z)-2-carboxy-4-methylthiazol-5(2H)-ylidene]ethyl phosphate + 2 H2O + H(+). It participates in cofactor biosynthesis; thiamine diphosphate biosynthesis. Catalyzes the rearrangement of 1-deoxy-D-xylulose 5-phosphate (DXP) to produce the thiazole phosphate moiety of thiamine. Sulfur is provided by the thiocarboxylate moiety of the carrier protein ThiS. In vitro, sulfur can be provided by H(2)S. This Campylobacter jejuni subsp. doylei (strain ATCC BAA-1458 / RM4099 / 269.97) protein is Thiazole synthase.